The chain runs to 265 residues: Hydroxyethylthiazole kinase (265 aa).

Substrate is bound at residue methionine 44. ATP is bound by residues lysine 120 and threonine 166. Residue glycine 193 participates in substrate binding.

Belongs to the Thz kinase family. Mg(2+) serves as cofactor.

The catalysed reaction is 5-(2-hydroxyethyl)-4-methylthiazole + ATP = 4-methyl-5-(2-phosphooxyethyl)-thiazole + ADP + H(+). It participates in cofactor biosynthesis; thiamine diphosphate biosynthesis; 4-methyl-5-(2-phosphoethyl)-thiazole from 5-(2-hydroxyethyl)-4-methylthiazole: step 1/1. Catalyzes the phosphorylation of the hydroxyl group of 4-methyl-5-beta-hydroxyethylthiazole (THZ). This is Hydroxyethylthiazole kinase from Clostridium novyi (strain NT).